The following is a 111-amino-acid chain: Anti-adapter protein IraM (111 aa).

This sequence belongs to the IraM/RssC family.

It is found in the cytoplasm. Functionally, inhibits RpoS proteolysis by regulating RssB activity, thereby increasing the stability of the sigma stress factor RpoS during magnesium starvation. The polypeptide is Anti-adapter protein IraM (Escherichia coli O127:H6 (strain E2348/69 / EPEC)).